We begin with the raw amino-acid sequence, 167 residues long: MTDTPTRIYVDADACPVKDEIYRVALRHSVPVSVVAGNFIRVPQDPLIERIAAGAGMDAADDWIAERARPGDVVVTSDIPLASRCVKAGADVIAPNGKPFTEQSIGMTLAVRNLMTDLRSAGEVTGGPRSFAPRDRSTFLSALDQTLRRIQRRRIDAAATSQNSSQG.

It belongs to the UPF0178 family.

The sequence is that of UPF0178 protein bll3966 from Bradyrhizobium diazoefficiens (strain JCM 10833 / BCRC 13528 / IAM 13628 / NBRC 14792 / USDA 110).